The chain runs to 137 residues: MPTINQLVRKGRKSHKGKSKSPALGFVYNSFKKEEIKNPSPQKRGVATRVGTMTPKKPNSALRKYARVRLSNLIEVTAYIPGIGHNLQEHSVVLIRGGRVKDLPGVRYHIIRGTLDTAGVDGRMQSRSKYGAKKPKK.

Disordered regions lie at residues 1 to 22 and 37 to 57; these read MPTI…SKSP and KNPS…TPKK. Positions 9-19 are enriched in basic residues; sequence RKGRKSHKGKS. D102 carries the 3-methylthioaspartic acid modification.

This sequence belongs to the universal ribosomal protein uS12 family. Part of the 30S ribosomal subunit. Contacts proteins S8 and S17. May interact with IF1 in the 30S initiation complex.

Functionally, with S4 and S5 plays an important role in translational accuracy. Its function is as follows. Interacts with and stabilizes bases of the 16S rRNA that are involved in tRNA selection in the A site and with the mRNA backbone. Located at the interface of the 30S and 50S subunits, it traverses the body of the 30S subunit contacting proteins on the other side and probably holding the rRNA structure together. The combined cluster of proteins S8, S12 and S17 appears to hold together the shoulder and platform of the 30S subunit. The chain is Small ribosomal subunit protein uS12 from Limosilactobacillus fermentum (strain NBRC 3956 / LMG 18251) (Lactobacillus fermentum).